A 324-amino-acid polypeptide reads, in one-letter code: S-methyl-5'-thioadenosine phosphorylase (324 aa).

Residues serine 14, 57 to 58 (RH), and 90 to 91 (SA) contribute to the phosphate site. A substrate-binding site is contributed by methionine 196. Residue serine 197 participates in phosphate binding. 220 to 222 (DYD) lines the substrate pocket.

Belongs to the PNP/MTAP phosphorylase family. MTAP subfamily. As to quaternary structure, homotrimer.

It localises to the cytoplasm. The protein localises to the nucleus. It carries out the reaction S-methyl-5'-thioadenosine + phosphate = 5-(methylsulfanyl)-alpha-D-ribose 1-phosphate + adenine. It functions in the pathway amino-acid biosynthesis; L-methionine biosynthesis via salvage pathway; S-methyl-5-thio-alpha-D-ribose 1-phosphate from S-methyl-5'-thioadenosine (phosphorylase route): step 1/1. Catalyzes the reversible phosphorylation of S-methyl-5'-thioadenosine (MTA) to adenine and 5-methylthioribose-1-phosphate. Involved in the breakdown of MTA, a major by-product of polyamine biosynthesis. Responsible for the first step in the methionine salvage pathway after MTA has been generated from S-adenosylmethionine. Has broad substrate specificity with 6-aminopurine nucleosides as preferred substrates. The polypeptide is S-methyl-5'-thioadenosine phosphorylase (Coprinopsis cinerea (strain Okayama-7 / 130 / ATCC MYA-4618 / FGSC 9003) (Inky cap fungus)).